Here is a 211-residue protein sequence, read N- to C-terminus: Protein-L-isoaspartate O-methyltransferase (211 aa).

Serine 62 is a catalytic residue.

The protein belongs to the methyltransferase superfamily. L-isoaspartyl/D-aspartyl protein methyltransferase family.

It is found in the cytoplasm. It carries out the reaction [protein]-L-isoaspartate + S-adenosyl-L-methionine = [protein]-L-isoaspartate alpha-methyl ester + S-adenosyl-L-homocysteine. Functionally, catalyzes the methyl esterification of L-isoaspartyl residues in peptides and proteins that result from spontaneous decomposition of normal L-aspartyl and L-asparaginyl residues. It plays a role in the repair and/or degradation of damaged proteins. This chain is Protein-L-isoaspartate O-methyltransferase, found in Shewanella putrefaciens (strain CN-32 / ATCC BAA-453).